The primary structure comprises 264 residues: 5'-nucleotidase SurE (264 aa).

Residues aspartate 8, aspartate 9, serine 39, and asparagine 95 each coordinate a divalent metal cation.

It belongs to the SurE nucleotidase family. A divalent metal cation serves as cofactor.

The protein localises to the cytoplasm. The catalysed reaction is a ribonucleoside 5'-phosphate + H2O = a ribonucleoside + phosphate. In terms of biological role, nucleotidase that shows phosphatase activity on nucleoside 5'-monophosphates. The protein is 5'-nucleotidase SurE of Syntrophomonas wolfei subsp. wolfei (strain DSM 2245B / Goettingen).